The sequence spans 412 residues: Gamma-glutamyl phosphate reductase (412 aa).

This sequence belongs to the gamma-glutamyl phosphate reductase family.

The protein resides in the cytoplasm. The catalysed reaction is L-glutamate 5-semialdehyde + phosphate + NADP(+) = L-glutamyl 5-phosphate + NADPH + H(+). Its pathway is amino-acid biosynthesis; L-proline biosynthesis; L-glutamate 5-semialdehyde from L-glutamate: step 2/2. Catalyzes the NADPH-dependent reduction of L-glutamate 5-phosphate into L-glutamate 5-semialdehyde and phosphate. The product spontaneously undergoes cyclization to form 1-pyrroline-5-carboxylate. The protein is Gamma-glutamyl phosphate reductase of Bartonella henselae (strain ATCC 49882 / DSM 28221 / CCUG 30454 / Houston 1) (Rochalimaea henselae).